Here is a 315-residue protein sequence, read N- to C-terminus: Olfactory receptor 56A3 (315 aa).

The Extracellular segment spans residues 1–29 (MTTHRNDTLSTEASDFLLNCFVRSPSWQH). A glycan (N-linked (GlcNAc...) asparagine) is linked at Asn-6. The chain crosses the membrane as a helical span at residues 30–50 (WLSLPLSLLFLLAVGANTTLL). Topologically, residues 51–58 (MTIWLEAS) are cytoplasmic. Residues 59–79 (LHQPLYYLLSLLSLLDIVLCL) form a helical membrane-spanning segment. Over 80–103 (TVIPKVLTIFWFDLRPISFPACFL) the chain is Extracellular. Cysteines 101 and 193 form a disulfide. A helical transmembrane segment spans residues 104–124 (QMYIMNCFLAMESCTFMVMAY). Residues 125–143 (DRYVAICHPLRYPSIITDH) lie on the Cytoplasmic side of the membrane. The helical transmembrane segment at 144-164 (FVVKAAMFILTRNVLMTLPIP) threads the bilayer. The Extracellular segment spans residues 165–200 (ILSAQLRYCGRNVIENCICANMSVSRLSCDDVTINH). Asn-185 carries an N-linked (GlcNAc...) asparagine glycan. A helical membrane pass occupies residues 201-221 (LYQFAGGWTLLGSDLILIFLS). Residues 222–241 (YTFILRAVLRLKAEGAVAKA) lie on the Cytoplasmic side of the membrane. Residues 242–262 (LSTCGSHFMLILFFSTILLVF) traverse the membrane as a helical segment. Over 263 to 277 (VLTHVAKKKVSPDVP) the chain is Extracellular. The helical transmembrane segment at 278-298 (VLLNVLHHVIPAALNPIIYGV) threads the bilayer. Residues 299-315 (RTQEIKQGMQRLLKKGC) are Cytoplasmic-facing.

It belongs to the G-protein coupled receptor 1 family.

Its subcellular location is the cell membrane. Odorant receptor. The protein is Olfactory receptor 56A3 (OR56A3) of Homo sapiens (Human).